The primary structure comprises 325 residues: Lipoyl synthase (325 aa).

Cys66, Cys71, Cys77, Cys92, Cys96, Cys99, and Ser303 together coordinate [4Fe-4S] cluster. Positions 78 to 292 (WEDREATFLI…AQFAEGLGFA (215 aa)) constitute a Radical SAM core domain.

It belongs to the radical SAM superfamily. Lipoyl synthase family. [4Fe-4S] cluster is required as a cofactor.

The protein localises to the cytoplasm. It carries out the reaction [[Fe-S] cluster scaffold protein carrying a second [4Fe-4S](2+) cluster] + N(6)-octanoyl-L-lysyl-[protein] + 2 oxidized [2Fe-2S]-[ferredoxin] + 2 S-adenosyl-L-methionine + 4 H(+) = [[Fe-S] cluster scaffold protein] + N(6)-[(R)-dihydrolipoyl]-L-lysyl-[protein] + 4 Fe(3+) + 2 hydrogen sulfide + 2 5'-deoxyadenosine + 2 L-methionine + 2 reduced [2Fe-2S]-[ferredoxin]. It participates in protein modification; protein lipoylation via endogenous pathway; protein N(6)-(lipoyl)lysine from octanoyl-[acyl-carrier-protein]: step 2/2. Catalyzes the radical-mediated insertion of two sulfur atoms into the C-6 and C-8 positions of the octanoyl moiety bound to the lipoyl domains of lipoate-dependent enzymes, thereby converting the octanoylated domains into lipoylated derivatives. This chain is Lipoyl synthase, found in Mycobacterium sp. (strain JLS).